A 297-amino-acid polypeptide reads, in one-letter code: Protease HtpX homolog (297 aa).

A helical transmembrane segment spans residues 16 to 36 (IFMAIGFLVGGMAGMILAFVV). His134 provides a ligand contact to Zn(2+). Glu135 is a catalytic residue. Zn(2+) is bound at residue His138. 2 consecutive transmembrane segments (helical) span residues 147 to 167 (MTVTATLAGAIGMLANFALFF) and 175 to 195 (IGSIAIMIFAPMAAALVQMAI). Residue Glu200 coordinates Zn(2+).

The protein belongs to the peptidase M48B family. The cofactor is Zn(2+).

It localises to the cell inner membrane. The sequence is that of Protease HtpX homolog from Hyphomonas neptunium (strain ATCC 15444).